Here is a 234-residue protein sequence, read N- to C-terminus: Thrombin-like enzyme acutin (234 aa).

A propeptide is located at residue methionine 1. The Peptidase S1 domain occupies valine 2–alanine 225. 6 cysteine pairs are disulfide-bonded: cysteine 8/cysteine 140, cysteine 27/cysteine 43, cysteine 75/cysteine 232, cysteine 119/cysteine 186, cysteine 151/cysteine 165, and cysteine 176/cysteine 201. A glycan (N-linked (GlcNAc...) asparagine) is linked at asparagine 21. Catalysis depends on charge relay system residues histidine 42 and aspartate 87. The active-site Charge relay system is serine 180.

This sequence belongs to the peptidase S1 family. Snake venom subfamily. Monomer. Expressed by the venom gland.

It localises to the secreted. Its function is as follows. Thrombin-like snake venom serine protease. Has arginyl esterase and fibrinogen clotting activities. The chain is Thrombin-like enzyme acutin from Deinagkistrodon acutus (Hundred-pace snake).